A 621-amino-acid chain; its full sequence is Membrane protein insertase YidC (621 aa).

6 helical membrane passes run 1–21, 363–383, 436–456, 486–506, 527–547, and 549–569; these read MDKN…GFSI, GWGL…KVLV, MGGC…FFFV, IPLL…TNIL, LMMY…SSGL, and YYYF…RKTT.

Belongs to the OXA1/ALB3/YidC family. Type 1 subfamily. As to quaternary structure, interacts with the Sec translocase complex via SecD. Specifically interacts with transmembrane segments of nascent integral membrane proteins during membrane integration.

It is found in the cell inner membrane. Functionally, required for the insertion and/or proper folding and/or complex formation of integral membrane proteins into the membrane. Involved in integration of membrane proteins that insert both dependently and independently of the Sec translocase complex, as well as at least some lipoproteins. Aids folding of multispanning membrane proteins. This Phocaeicola vulgatus (strain ATCC 8482 / DSM 1447 / JCM 5826 / CCUG 4940 / NBRC 14291 / NCTC 11154) (Bacteroides vulgatus) protein is Membrane protein insertase YidC.